A 135-amino-acid chain; its full sequence is MIMSRSAIIEKLQNEQMKKDITPFRIGDTVRVHIRIIEGDKERTQVFAGTVIARKGQGLSETFSVHRVAYGEGMERVFMLHSPRIAKIEVIKEGDVRRSKLYYLRGTSGKASKVKARLGARRSSNAVTKQIVSAE.

This sequence belongs to the bacterial ribosomal protein bL19 family.

Functionally, this protein is located at the 30S-50S ribosomal subunit interface and may play a role in the structure and function of the aminoacyl-tRNA binding site. The polypeptide is Large ribosomal subunit protein bL19 (Protochlamydia amoebophila (strain UWE25)).